Reading from the N-terminus, the 1105-residue chain is MAAAAGGGGPGTAVGATGSGIAAAAAGLAVYRRKDGGPATKFWESPETVSQLDSVRVWLGKHYKKYVHADAPTNKTLAGLVVQLLQFQEDAFGKHVTNPAFTKLPAKCFMDFKAGGALCHILGAAYKYKNEQGWRRFDLQNPSRMDRNVEMFMNIEKTLVQNNCLTRPNIYLIPDIDLKLANKLKDIIKRHQGTFTDEKSKASHHIYPYSSSQDDEEWLRPVMRKEKQVLVHWGFYPDSYDTWVHSNDVDAEIEDPPIPEKPWKVHVKWILDTDIFNEWMNEEDYEVDENRKPVSFRQRISTKNEEPVRSPERRDRKASANARKRKHSPSPPPPTPTESRKKSGKKGQASLYGKRRSQKEEDEQEDLTKDMEDPTPVPNIEEVVLPKNVNLKKDSENTPVKGGTVADLDEQDEETVTAGGKEDEDPAKGDQSRSVDLGEDNVTEQTNHIIIPSYASWFDYNCIHVIERRALPEFFNGKNKSKTPEIYLAYRNFMIDTYRLNPQEYLTSTACRRNLTGDVCAVMRVHAFLEQWGLVNYQVDPESRPMAMGPPPTPHFNVLADTPSGLVPLHLRSPQVPAAQQMLNFPEKNKEKPVDLQNFGLRTDIYSKKTLAKSKGASAGREWTEQETLLLLEALEMYKDDWNKVSEHVGSRTQDECILHFLRLPIEDPYLENSDASLGPLAYQPVPFSQSGNPVMSTVAFLASVVDPRVASAAAKAALEEFSRVREEVPLELVEAHVKKVQEAARASGKVDPTYGLESSCIAGTGPDEPEKLEGAEEEKMEADPDGQQPEKAENKVENETDEGDKAQDGENEKNSEKEQDSEVSEDTKSEEKETEENKELTDTCKERESDTGKKKVEHEISEGNVATAAAAALASAATKAKHLAAVEERKIKSLVALLVETQMKKLEIKLRHFEELETIMDREKEALEQQRQQLLTERQNFHMEQLKYAELRARQQMEQQQHGQNPQQAHQHSGGPGLAPLGAAGHPGMMPHQQPPPYPLMHHQMPPPHPPQPGQIPGPGSMMPGQHMPGRMIPTVAANIHPSGSGPTPPGMPPMPGNILGPRVPLTAPNGMYPPPPQQQPPPPPPADGVPPPPAPGPPASAAP.

At Ala2 the chain carries N-acetylalanine. Residues 28–302 (LAVYRRKDGG…PVSFRQRIST (275 aa)) form a marR-like, BRCT and chromo domains module region. Residues 38 to 164 (PATKFWESPE…IEKTLVQNNC (127 aa)) enclose the MarR-like domain. One can recognise a BRCT; N-terminus domain in the interval 168-211 (PNIYLIPDIDLKLANKLKDIIKRHQGTFTDEKSKASHHIYPYSS). A Glycyl lysine isopeptide (Lys-Gly) (interchain with G-Cter in SUMO2) cross-link involves residue Lys179. In terms of domain architecture, Chromo spans 217 to 245 (EWLRPVMRKEKQVLVHWGFYPDSYDTWVH). The BRCT; C-terminus domain maps to 261 to 285 (KPWKVHVKWILDTDIFNEWMNEEDY). Positions 296–439 (FRQRISTKNE…DQSRSVDLGE (144 aa)) are disordered. Positions 302 to 318 (TKNEEPVRSPERRDRKA) are enriched in basic and acidic residues. Phosphoserine occurs at positions 310, 328, and 330. Thr335 is modified (phosphothreonine). Lys345 and Lys346 each carry N6-acetyllysine. Ser350 carries the post-translational modification Phosphoserine. Position 354 is an N6-acetyllysine (Lys354). Position 357 is a phosphoserine (Ser357). Lys359 bears the N6-acetyllysine; alternate mark. Lys359 participates in a covalent cross-link: Glycyl lysine isopeptide (Lys-Gly) (interchain with G-Cter in SUMO2); alternate. Phosphothreonine is present on Thr398. Positions 449–546 (IIIPSYASWF…YQVDPESRPM (98 aa)) constitute an SWIRM domain. A Phosphoserine modification is found at Ser573. Residue Lys592 forms a Glycyl lysine isopeptide (Lys-Gly) (interchain with G-Cter in SUMO2) linkage. Positions 618-669 (SAGREWTEQETLLLLEALEMYKDDWNKVSEHVGSRTQDECILHFLRLPIEDP) constitute an SANT domain. Lys739 participates in a covalent cross-link: Glycyl lysine isopeptide (Lys-Gly) (interchain with G-Cter in SUMO2). Residues 745 to 860 (ARASGKVDPT…DTGKKKVEHE (116 aa)) form a disordered region. The segment covering 776-785 (AEEEKMEADP) has biased composition (acidic residues). Over residues 789-860 (QPEKAENKVE…DTGKKKVEHE (72 aa)) the composition is skewed to basic and acidic residues. A Glycyl lysine isopeptide (Lys-Gly) (interchain with G-Cter in SUMO2) cross-link involves residue Lys796. Phosphoserine occurs at positions 822 and 825. Residues Lys829 and Lys856 each participate in a glycyl lysine isopeptide (Lys-Gly) (interchain with G-Cter in SUMO2) cross-link. The stretch at 914 to 946 (FEELETIMDREKEALEQQRQQLLTERQNFHMEQ) forms a coiled coil. N6-acetyllysine is present on Lys948. Disordered stretches follow at residues 956 to 1028 (QQME…PGQH) and 1041 to 1105 (IHPS…SAAP). Low complexity predominate over residues 957–993 (QMEQQQHGQNPQQAHQHSGGPGLAPLGAAGHPGMMPH). Pro residues-rich tracts occupy residues 994–1017 (QQPPPYPLMHHQMPPPHPPQPGQI) and 1048–1057 (PTPPGMPPMP). Position 1064 is an asymmetric dimethylarginine (Arg1064). Residues 1073–1105 (MYPPPPQQQPPPPPPADGVPPPPAPGPPASAAP) are compositionally biased toward pro residues.

It belongs to the SMARCC family. In terms of assembly, component of the multiprotein chromatin-remodeling complexes SWI/SNF: SWI/SNF-A (BAF), SWI/SNF-B (PBAF) and related complexes. The canonical complex contains a catalytic subunit (either SMARCA4/BRG1/BAF190A or SMARCA2/BRM/BAF190B) and at least SMARCE1, ACTL6A/BAF53, SMARCC1/BAF155, SMARCC2/BAF170, and SMARCB1/SNF5/BAF47. Other subunits specific to each of the complexes may also be present permitting several possible combinations developmentally and tissue specific. Component of the BAF complex, which includes at least actin (ACTB), ARID1A/BAF250A, ARID1B/BAF250B, SMARCA2/BRM, SMARCA4/BRG1, ACTL6A/BAF53, ACTL6B/BAF53B, SMARCE1/BAF57, SMARCC1/BAF155, SMARCC2/BAF170, SMARCB1/SNF5/INI1, and one or more SMARCD1/BAF60A, SMARCD2/BAF60B, or SMARCD3/BAF60C. In muscle cells, the BAF complex also contains DPF3. Component of neural progenitors-specific chromatin remodeling complex (npBAF complex) composed of at least, ARID1A/BAF250A or ARID1B/BAF250B, SMARCD1/BAF60A, SMARCD3/BAF60C, SMARCA2/BRM/BAF190B, SMARCA4/BRG1/BAF190A, SMARCB1/BAF47, SMARCC1/BAF155, SMARCE1/BAF57, SMARCC2/BAF170, PHF10/BAF45A, ACTL6A/BAF53A and actin. Component of neuron-specific chromatin remodeling complex (nBAF complex) composed of at least, ARID1A/BAF250A or ARID1B/BAF250B, SMARCD1/BAF60A, SMARCD3/BAF60C, SMARCA2/BRM/BAF190B, SMARCA4/BRG1/BAF190A, SMARCB1/BAF47, SMARCC1/BAF155, SMARCE1/BAF57, SMARCC2/BAF170, DPF1/BAF45B, DPF3/BAF45C, ACTL6B/BAF53B and actin. Component of the SWI/SNF-B (PBAF) chromatin remodeling complex, at least composed of SMARCA4/BRG1, SMARCB1/BAF47/SNF5, ACTL6A/BAF53A or ACTL6B/BAF53B, SMARCE1/BAF57, SMARCD1/BAF60A, SMARCD2/BAF60B, perhaps SMARCD3/BAF60C, SMARCC1/BAF155, SMARCC2/BAF170, PBRM1/BAF180, ARID2/BAF200 and actin. Component of SWI/SNF (GBAF) subcomplex, which includes at least BICRA or BICRAL (mutually exclusive), BRD9, SS18, SMARCA2/BRM, SMARCA4/BRG1/BAF190A, ACTL6A/BAF53, SMARCC1/BAF155, and SMARCD1/BAF60A. May also interact with the SIN3A histone deacetylase transcription repressor complex in conjunction with SMARCA2 and SMARCA4. The minimal complex composed of SMARCC1 and SMARCA4 seems to be able to associate with cyclin such as CCNE1 or transcription factors such as KLF1 or GATA1. Interacts with NR3C1 and SMARD1. Interacts with TRIP12; leading to disrupt interaction between TRIP12 and SMARCE1 and prevent SMARCE1 ubiquitination. Interacts with CEBPB (when not methylated). Interacts with KDM6B. Interacts with MKKS; the interaction takes place predominantly in the cytoplasm and may modulate SMARCC1 location. Interacts with DPF2. Interacts with PRDM1/BLIMP1. Interacts with DPF3a (isoform 2 of DPF3/BAF45C) and with HDGFL2 in a DPF3a-dependent manner. In terms of processing, phosphorylated on undefined residues at the G2/M transition by ERK1 and other kinases. This may contribute to cell cycle specific inactivation of remodeling complexes containing the phosphorylated protein. Expressed in brain, heart, muscle, placenta, lung, liver, muscle, kidney and pancreas.

It is found in the nucleus. The protein localises to the cytoplasm. In terms of biological role, involved in transcriptional activation and repression of select genes by chromatin remodeling (alteration of DNA-nucleosome topology). Component of SWI/SNF chromatin remodeling complexes that carry out key enzymatic activities, changing chromatin structure by altering DNA-histone contacts within a nucleosome in an ATP-dependent manner. May stimulate the ATPase activity of the catalytic subunit of the complex. Belongs to the neural progenitors-specific chromatin remodeling complex (npBAF complex) and the neuron-specific chromatin remodeling complex (nBAF complex). During neural development a switch from a stem/progenitor to a postmitotic chromatin remodeling mechanism occurs as neurons exit the cell cycle and become committed to their adult state. The transition from proliferating neural stem/progenitor cells to postmitotic neurons requires a switch in subunit composition of the npBAF and nBAF complexes. As neural progenitors exit mitosis and differentiate into neurons, npBAF complexes which contain ACTL6A/BAF53A and PHF10/BAF45A, are exchanged for homologous alternative ACTL6B/BAF53B and DPF1/BAF45B or DPF3/BAF45C subunits in neuron-specific complexes (nBAF). The npBAF complex is essential for the self-renewal/proliferative capacity of the multipotent neural stem cells. The nBAF complex along with CREST plays a role regulating the activity of genes essential for dendrite growth. The protein is SWI/SNF complex subunit SMARCC1 of Homo sapiens (Human).